Reading from the N-terminus, the 661-residue chain is Heme transporter BhuA (661 aa).

An N-terminal signal peptide occupies residues 1–23; it reads MKFTRTLVLASTSLLATVATSQA. The TBDR plug domain occupies 48–159; the sequence is KDNIEATGGT…AAGAIRYETV (112 aa). Residues 170–661 form the TBDR beta-barrel domain; sequence TFGARIIGSY…TFTFQTAFKF (492 aa).

Belongs to the TonB-dependent receptor family.

Its subcellular location is the cell outer membrane. In terms of biological role, heme transporter. The sequence is that of Heme transporter BhuA (bhuA) from Brucella abortus biovar 1 (strain 9-941).